Reading from the N-terminus, the 349-residue chain is Decapping nuclease RAI1 (349 aa).

Glu-157 serves as a coordination point for a divalent metal cation. Glu-205 is a binding site for substrate. A divalent metal cation is bound by residues Asp-207, Glu-222, and Leu-223. Positions 224 and 248 each coordinate substrate.

It belongs to the DXO/Dom3Z family. As to quaternary structure, interacts with RAT1; the interaction is direct, stabilizes RAT1 protein structure and stimulates its exoribonuclease activity. The interaction also stimulates RAI1 pyrophosphohydrolase activity, probably by recruiting it to mRNA substrates. A divalent metal cation is required as a cofactor.

Its subcellular location is the nucleus. The catalysed reaction is a 5'-end NAD(+)-phospho-ribonucleoside in mRNA + H2O = a 5'-end phospho-ribonucleoside in mRNA + NAD(+) + H(+). It catalyses the reaction a 5'-end (N(7)-methyl 5'-triphosphoguanosine)-ribonucleoside-ribonucleotide in mRNA + H2O = a (N(7)-methyl 5'-triphosphoguanosine)-nucleoside + a 5'-end phospho-ribonucleoside in mRNA + H(+). It carries out the reaction a 5'-end triphospho-ribonucleoside in mRNA + H2O = a 5'-end phospho-ribonucleoside in mRNA + diphosphate + H(+). Its function is as follows. Decapping enzyme for NAD-capped RNAs: specifically hydrolyzes the nicotinamide adenine dinucleotide (NAD) cap from a subset of RNAs by removing the entire NAD moiety from the 5'-end of an NAD-capped RNA. The NAD-cap is present at the 5'-end of some RNAs and snoRNAs. In contrast to the canonical 5'-end N7 methylguanosine (m7G) cap, the NAD cap promotes mRNA decay. Also acts as a non-canonical decapping enzyme that removes the entire cap structure of m7G capped or incompletely capped RNAs. Has decapping activity toward incomplete 5'-end m7G cap mRNAs such as unmethylated 5'-end-capped RNA (cap0), while it has no activity toward 2'-O-ribose methylated m7G cap (cap1). Also possesses RNA 5'-pyrophosphohydrolase activity by hydrolyzing the 5'-end triphosphate to release pyrophosphates. Stimulates exoribonuclease activity of Rat1, allowing it to degrade RNAs with stable secondary structure more effectively. This is Decapping nuclease RAI1 (RAI1) from Yarrowia lipolytica (strain CLIB 122 / E 150) (Yeast).